An 836-amino-acid chain; its full sequence is Homeobox-leucine zipper protein ATHB-15 (836 aa).

A DNA-binding region (homeobox) is located at residues 14–77 (DNGKYVRYTP…NRRCREKQRK (64 aa)). A coiled-coil region spans residues 72 to 115 (REKQRKEASRLQAVNRKLTAMNKLLMEENDRLQKQVSQLVHENS). The START domain maps to 151-379 (RDASPAGLLS…IAQEVTQTNS (229 aa)).

The protein belongs to the HD-ZIP homeobox family. Class III subfamily. Interacts with ESR1 and ESR2. Interacts with ZPR3. As to expression, highly expressed the developing vascular elements and the adaxial portion of cotyledons. Expressed in developing ovules, stamens and carpels. Expressed in procambium and shoot meristem.

The protein localises to the nucleus. Functionally, probable transcription factor involved in the regulation of meristem development to promote lateral organ formation. May regulates procambial and vascular tissue formation or maintenance, and vascular development in inflorescence stems. The protein is Homeobox-leucine zipper protein ATHB-15 (ATHB-15) of Arabidopsis thaliana (Mouse-ear cress).